The following is a 663-amino-acid chain: MKKGKILALAGVALLATGVLAACSNSTSNSSNSSSSGADQVFNYIYEVDPENLNYLISSKAATTDLTANLIDGLLENDNYGNLVPSMAEDWTVSKDGLTYTYTLRKDAKWYTSDGEEYADVKAQDFVAGLKYAADNKSETLYLVQSSIKGLDDYVNGKTKDFSSVGVKAVDDHTVQYTLNEPESFWNSKTTMGILYPVNEEFLKSKGDKFAQSADPTSLLYNGPFLLKSITSKSSIEFAKNPNYWDKDNVHVSDVKLTYFDGQDQGKPAEQFAKGALSAARLAPTSATFSKVEKEFKDNIVYTPQDSTSYLVGVNIDRQAYNHTAKSSDAQKSSTKKALMNKDFRQALSFAFDRTAYASQVNGKEGATKMLRNLYIPPTFVQADGKSFGELVKEKVASYGDEWKDVNFDDAQDGLYNKEKAKAEFAKAKKALQEEGVEFPIHLDMPVDQTATAKVQRVQSLKQSIESSLGTDNVVVDIHQMKTDDVLNITYYAASAAEEDWDISDNVGWSPDYQDPSTYLEIIKPGGENTKTFLGFDGKENAAAEQVGLKEYAKLVDEAAAEKTDVNKRYEKYATAQAWLTDSALLIPTTSRTGRPVLTKIVPFTAPFAWSGAKGRDMASYKYLKLQDKAVTAKEYQKAQEKWNKERAESNKKAQEELEKHVK.

An N-terminal signal peptide occupies residues 1 to 22 (MKKGKILALAGVALLATGVLAA). Residue C23 is the site of N-palmitoyl cysteine attachment. C23 carries S-diacylglycerol cysteine lipidation. The tract at residues 637–663 (QKAQEKWNKERAESNKKAQEELEKHVK) is disordered.

It belongs to the bacterial solute-binding protein 5 family.

The protein localises to the cell membrane. May be involved in the expression of cell surface properties important for colonization of the human oral cavity. It may also be involved in uptake processes. This Streptococcus gordonii (strain Challis / ATCC 35105 / BCRC 15272 / CH1 / DL1 / V288) protein is Oligopeptide-binding protein SarA (sarA).